The primary structure comprises 721 residues: MAKKIGVTMEVGNDGVAVITISNPPVNSLASPIISGLKEKFRDANQRNDVKAIVLIGNNGRFSGGFDINVFQQVHKTGDLSLMPEVSVELVCNLMEDSRKPVVAAVEGLALGGGLELAMACHARVAAPKAQLGLPELTLGVIPGFGGTQRLPRLVGLAKATDMILLSKSISSEEGHKLGLIDALVPPGDVLSTSRKWALDIAEGRKPFLQSLHRTDKIGSLSEARAILKNSRQLAKKIAPNMPQHHACIEVIEEGIIHGGYSGVLKEAEVFKQLVLSDTAKGLVHVFFAQRATSKVPNVTDVGLKPRPIKKVAVIGGGLMGSGIATALLLSNIRVVLKEINSEFLMKGIKSVEANMKSLVSRGKLTQDKAGKALSLFKGVLDYTEFNDVDMVIEAVIENIQLKQNIFKEIEKVCSPHCILASNTSTIDLDVIGEKTNSKDRIVGAHFFSPAHLMPLLEIVRSKNTSAQVILDLMAVGKAIKKVPVVVGNCIGFAVNRTFFPYSQAAHMLANLGVDLFRIDSVITSFGLPLGPFQLGDLAGHGIGLAVGPIYAKVYGDRMFRSPMTELLLKSGRNGKINGRGYYIYEKGSKPKPDPSVLSIVEKSRKLTNIMPGGKPISVTDKEIVEMILFPVVNEACRVLDEGVVIRASDLDIASVLGMSFPSYRGGIVFWADTVGPKYIYERLKKLSETYGSFFKPSRYLEERAMNGMLLSESKSSRSKL.

E116 functions as the Nucleophile in the catalytic mechanism. E136 acts as the Proton acceptor in catalysis. The Microbody targeting signal motif lies at S719–L721.

It in the N-terminal section; belongs to the enoyl-CoA hydratase/isomerase family. This sequence in the central section; belongs to the 3-hydroxyacyl-CoA dehydrogenase family. In terms of tissue distribution, widely expressed.

The protein resides in the peroxisome. The enzyme catalyses a (3S)-3-hydroxyacyl-CoA = a (2E)-enoyl-CoA + H2O. It carries out the reaction a 4-saturated-(3S)-3-hydroxyacyl-CoA = a (3E)-enoyl-CoA + H2O. The catalysed reaction is (3S)-3-hydroxybutanoyl-CoA = (2E)-butenoyl-CoA + H2O. It catalyses the reaction (3S)-hydroxyoctanoyl-CoA = (2E)-octenoyl-CoA + H2O. The enzyme catalyses (3S)-3-hydroxydodecanoyl-CoA = (2E)-dodecenoyl-CoA + H2O. It carries out the reaction (3S)-hydroxytetradecanoyl-CoA = (2E)-tetradecenoyl-CoA + H2O. The catalysed reaction is (3S)-hydroxyhexanoyl-CoA = (2E)-hexenoyl-CoA + H2O. It catalyses the reaction a (3Z)-enoyl-CoA = a 4-saturated (2E)-enoyl-CoA. The enzyme catalyses a (3E)-enoyl-CoA = a 4-saturated (2E)-enoyl-CoA. It carries out the reaction (3S)-3-hydroxybutanoyl-CoA = (3R)-3-hydroxybutanoyl-CoA. The catalysed reaction is a (3S)-3-hydroxyacyl-CoA + NAD(+) = a 3-oxoacyl-CoA + NADH + H(+). It catalyses the reaction (3S)-3-hydroxybutanoyl-CoA + NAD(+) = acetoacetyl-CoA + NADH + H(+). The enzyme catalyses (3S)-hydroxyhexanoyl-CoA + NAD(+) = 3-oxohexanoyl-CoA + NADH + H(+). It carries out the reaction (3S)-hydroxyoctanoyl-CoA + NAD(+) = 3-oxooctanoyl-CoA + NADH + H(+). The catalysed reaction is (3S)-3-hydroxydodecanoyl-CoA + NAD(+) = 3-oxododecanoyl-CoA + NADH + H(+). It catalyses the reaction (3S)-hydroxytetradecanoyl-CoA + NAD(+) = 3-oxotetradecanoyl-CoA + NADH + H(+). It functions in the pathway lipid metabolism; fatty acid beta-oxidation. Involved in peroxisomal fatty acid beta-oxidation. Required for wound-induced jasmonate biosynthesis. Possesses enoyl-CoA hydratase activity against short chain substrates (C4-C6) and 3-hydroxyacyl-CoA dehydrogenase activity against chains of variable sizes (C6-C16). Possesses cinnamoyl-CoA hydratase activity and is involved in the peroxisomal beta-oxidation pathway for the biosynthesis of benzoic acid (BA). Required for the accumulation in seeds of benzoylated glucosinolates (BGs) and substituted hydroxybenzoylated choline esters, which are BA-containing secondary metabolites. Required for salicylic acid (SA) in seeds. The protein is Peroxisomal fatty acid beta-oxidation multifunctional protein AIM1 (AIM1) of Arabidopsis thaliana (Mouse-ear cress).